Reading from the N-terminus, the 148-residue chain is SsrA-binding protein (148 aa).

Residues A119–G148 form a disordered region. The span at D126–R142 shows a compositional bias: basic and acidic residues.

This sequence belongs to the SmpB family.

It is found in the cytoplasm. Its function is as follows. Required for rescue of stalled ribosomes mediated by trans-translation. Binds to transfer-messenger RNA (tmRNA), required for stable association of tmRNA with ribosomes. tmRNA and SmpB together mimic tRNA shape, replacing the anticodon stem-loop with SmpB. tmRNA is encoded by the ssrA gene; the 2 termini fold to resemble tRNA(Ala) and it encodes a 'tag peptide', a short internal open reading frame. During trans-translation Ala-aminoacylated tmRNA acts like a tRNA, entering the A-site of stalled ribosomes, displacing the stalled mRNA. The ribosome then switches to translate the ORF on the tmRNA; the nascent peptide is terminated with the 'tag peptide' encoded by the tmRNA and targeted for degradation. The ribosome is freed to recommence translation, which seems to be the essential function of trans-translation. This is SsrA-binding protein from Paraburkholderia xenovorans (strain LB400).